The primary structure comprises 490 residues: MSRYGLQQLYINGAYVDSTGDDTFDAVNPANGEIIAQLQSATVADVDRAVIAAAAGQKIWAAMTAMERSRILRRAVDILRERNDELALLETHDTGKPLSETRTVDIVTGADVLEYYAGLIPMLEGQQIPLRDTSFAYTRREPLGVVAGIGAWNYPIQIALWKSAPALAAGNAMIFKPSEVTSLTALKLAEVYTEAGLPAGVFNVLTGTGQSVGQALTTHPGIAKVSFTGGIASGKTVMANAAGSTLKDVTMELGGKSPLIVFEDADLDKAADIAMMANFFSSGQVCTNGTRVFVPQALQTQFEEKILARVQRIRIGNPTDEAVNFGPLVSFPHRESVLRYIESGKREGARVLVGGEPMTDEKYAQGAFVAPTVFTDCRDDMKIVREEIFGPVMSILTYQNEDEVIRRANDSEYGLAAGVVTGDLNRAHRVIHQLEAGICWINTWGESPAEMPVGGYKHSGVGRENGITTLEHYTQIKSVQVELGEFRSVF.

Asp-93 is a binding site for K(+). 150–152 (GAW) contributes to the NAD(+) binding site. Lys-162 (charge relay system) is an active-site residue. NAD(+) is bound at residue 176-179 (KPSE). Residue Val-180 participates in K(+) binding. Residue 230–233 (GIAS) participates in NAD(+) binding. A K(+)-binding site is contributed by Leu-246. Glu-252 (proton acceptor) is an active-site residue. Residues Gly-254, Cys-286, and Glu-387 each coordinate NAD(+). Catalysis depends on Cys-286, which acts as the Nucleophile. Cys-286 is subject to Cysteine sulfenic acid (-SOH). K(+)-binding residues include Lys-457 and Gly-460. The active-site Charge relay system is the Glu-464.

This sequence belongs to the aldehyde dehydrogenase family. As to quaternary structure, dimer of dimers. Requires K(+) as cofactor.

The catalysed reaction is betaine aldehyde + NAD(+) + H2O = glycine betaine + NADH + 2 H(+). The protein operates within amine and polyamine biosynthesis; betaine biosynthesis via choline pathway; betaine from betaine aldehyde: step 1/1. Functionally, involved in the biosynthesis of the osmoprotectant glycine betaine. Catalyzes the irreversible oxidation of betaine aldehyde to the corresponding acid. The sequence is that of Betaine aldehyde dehydrogenase from Pectobacterium carotovorum subsp. carotovorum (strain PC1).